The sequence spans 130 residues: Small ribosomal subunit protein uS8A (130 aa).

The protein belongs to the universal ribosomal protein uS8 family. Component of the small ribosomal subunit (SSU). Mature yeast ribosomes consist of a small (40S) and a large (60S) subunit. The 40S small subunit contains 1 molecule of ribosomal RNA (18S rRNA) and at least 33 different proteins. The large 60S subunit contains 3 rRNA molecules (25S, 5.8S and 5S rRNA) and at least 46 different proteins.

The protein resides in the cytoplasm. It localises to the nucleus. Functionally, component of the ribosome, a large ribonucleoprotein complex responsible for the synthesis of proteins in the cell. The small ribosomal subunit (SSU) binds messenger RNAs (mRNAs) and translates the encoded message by selecting cognate aminoacyl-transfer RNA (tRNA) molecules. The large subunit (LSU) contains the ribosomal catalytic site termed the peptidyl transferase center (PTC), which catalyzes the formation of peptide bonds, thereby polymerizing the amino acids delivered by tRNAs into a polypeptide chain. The nascent polypeptides leave the ribosome through a tunnel in the LSU and interact with protein factors that function in enzymatic processing, targeting, and the membrane insertion of nascent chains at the exit of the ribosomal tunnel. The sequence is that of Small ribosomal subunit protein uS8A (rps2201) from Schizosaccharomyces pombe (strain 972 / ATCC 24843) (Fission yeast).